Here is a 276-residue protein sequence, read N- to C-terminus: MSWWQVIVLAAAQGLTEFLPVSSSGHLAIVSRIFFSGDAGASFTAVSQLGTEAAVVIYFARDIVRILSAWLHGLVVKAHRNTDYRLGWYVIIGTIPICILGLFFKDDIRSGVRNLWVVVTALVVFSGVIALAEYVGRQSRHIERLTWRDAVVVGIAQTLALVPGVSRSGSTISAGLFLGLDRELAARFGFLLAIPAVFASGLFSLPDAFHPVTEGMSATGPQLLVATLIAFVLGLTAVAWLLRFLVRHNMYWFVGYRVLVGTGMLVLLATGTVAAT.

Transmembrane regions (helical) follow at residues 84–104 (YRLGWYVIIGTIPICILGLFF), 115–135 (LWVVVTALVVFSGVIALAEYV), 188–208 (FGFLLAIPAVFASGLFSLPDA), 222–242 (QLLVATLIAFVLGLTAVAWLL), and 250–270 (MYWFVGYRVLVGTGMLVLLAT).

It belongs to the UppP family.

The protein localises to the cell membrane. It carries out the reaction di-trans,octa-cis-undecaprenyl diphosphate + H2O = di-trans,octa-cis-undecaprenyl phosphate + phosphate + H(+). In terms of biological role, catalyzes the dephosphorylation of undecaprenyl diphosphate (UPP). Confers resistance to bacitracin. In Mycobacterium tuberculosis (strain ATCC 25177 / H37Ra), this protein is Undecaprenyl-diphosphatase.